The sequence spans 883 residues: Phosphoenolpyruvate carboxylase (883 aa).

Residues H141 and K547 contribute to the active site.

The protein belongs to the PEPCase type 1 family. Requires Mg(2+) as cofactor.

The enzyme catalyses oxaloacetate + phosphate = phosphoenolpyruvate + hydrogencarbonate. Forms oxaloacetate, a four-carbon dicarboxylic acid source for the tricarboxylic acid cycle. This is Phosphoenolpyruvate carboxylase from Chromohalobacter salexigens (strain ATCC BAA-138 / DSM 3043 / CIP 106854 / NCIMB 13768 / 1H11).